The sequence spans 291 residues: Methionine aminopeptidase (291 aa).

His118 contacts substrate. A divalent metal cation contacts are provided by Asp135, Asp146, and His209. His216 serves as a coordination point for substrate. A divalent metal cation contacts are provided by Glu241 and Glu273.

This sequence belongs to the peptidase M24A family. Methionine aminopeptidase type 1 subfamily. Monomer. Requires Co(2+) as cofactor. Zn(2+) serves as cofactor. It depends on Mn(2+) as a cofactor. The cofactor is Fe(2+).

It carries out the reaction Release of N-terminal amino acids, preferentially methionine, from peptides and arylamides.. In terms of biological role, removes the N-terminal methionine from nascent proteins. The N-terminal methionine is often cleaved when the second residue in the primary sequence is small and uncharged (Met-Ala-, Cys, Gly, Pro, Ser, Thr, or Val). Requires deformylation of the N(alpha)-formylated initiator methionine before it can be hydrolyzed. This is Methionine aminopeptidase from Chlamydia pneumoniae (Chlamydophila pneumoniae).